Consider the following 360-residue polypeptide: N-acetylmuramoyl-L-alanine amidase CwlL (360 aa).

Residues 1–39 (MVKVVKNFVKVNQYTRPGLKLAGVKGIVMHYTATPGASA) form the signal peptide. Positions 40–154 (LNERDYFNGT…DVTNKICPAP (115 aa)) constitute an N-acetylmuramoyl-L-alanine amidase domain. A run of 4 repeats spans residues 166-191 (RKKVDSLLGNKTVSKTTSSTSQSSKS), 196-259 (LKKG…EKAL), 265-289 (KKKKPSSNGKKTSYPLPSGIYKVKS), and 291-355 (LMKG…KAKL). 2 X approximate repeats regions lie at residues 166–289 (RKKV…KVKS) and 196–355 (LKKG…KAKL).

It belongs to the N-acetylmuramoyl-L-alanine amidase 2 family.

Its subcellular location is the secreted. The enzyme catalyses Hydrolyzes the link between N-acetylmuramoyl residues and L-amino acid residues in certain cell-wall glycopeptides.. The sequence is that of N-acetylmuramoyl-L-alanine amidase CwlL (cwlL) from Bacillus licheniformis.